The chain runs to 192 residues: Xanthine phosphoribosyltransferase (192 aa).

Xanthine contacts are provided by Leu20 and Asn27. 128–132 lines the 5-phospho-alpha-D-ribose 1-diphosphate pocket; that stretch reads ANGQA. Lys156 provides a ligand contact to xanthine.

It belongs to the purine/pyrimidine phosphoribosyltransferase family. Xpt subfamily. Homodimer.

Its subcellular location is the cytoplasm. It catalyses the reaction XMP + diphosphate = xanthine + 5-phospho-alpha-D-ribose 1-diphosphate. It participates in purine metabolism; XMP biosynthesis via salvage pathway; XMP from xanthine: step 1/1. Converts the preformed base xanthine, a product of nucleic acid breakdown, to xanthosine 5'-monophosphate (XMP), so it can be reused for RNA or DNA synthesis. This chain is Xanthine phosphoribosyltransferase, found in Listeria innocua serovar 6a (strain ATCC BAA-680 / CLIP 11262).